Reading from the N-terminus, the 127-residue chain is Large ribosomal subunit protein bL20 (127 aa).

It belongs to the bacterial ribosomal protein bL20 family.

In terms of biological role, binds directly to 23S ribosomal RNA and is necessary for the in vitro assembly process of the 50S ribosomal subunit. It is not involved in the protein synthesizing functions of that subunit. In Bifidobacterium longum (strain DJO10A), this protein is Large ribosomal subunit protein bL20.